We begin with the raw amino-acid sequence, 393 residues long: S-adenosylmethionine synthase (393 aa).

Glutamate 10 is a binding site for Mg(2+). Residue histidine 16 participates in ATP binding. K(+) is bound at residue glutamate 44. Positions 57 and 100 each coordinate L-methionine. ATP is bound by residues 168–170 (DGK), 236–239 (SGRF), aspartate 247, 253–254 (RK), alanine 270, lysine 274, and lysine 278. Residue aspartate 247 coordinates L-methionine. Position 278 (lysine 278) interacts with L-methionine.

It belongs to the AdoMet synthase family. As to quaternary structure, homotetramer. Mn(2+) serves as cofactor. Mg(2+) is required as a cofactor. It depends on Co(2+) as a cofactor. Requires K(+) as cofactor.

The protein localises to the cytoplasm. The enzyme catalyses L-methionine + ATP + H2O = S-adenosyl-L-methionine + phosphate + diphosphate. It participates in amino-acid biosynthesis; S-adenosyl-L-methionine biosynthesis; S-adenosyl-L-methionine from L-methionine: step 1/1. Functionally, catalyzes the formation of S-adenosylmethionine from methionine and ATP. The reaction comprises two steps that are both catalyzed by the same enzyme: formation of S-adenosylmethionine (AdoMet) and triphosphate, and subsequent hydrolysis of the triphosphate. This Musa acuminata (Banana) protein is S-adenosylmethionine synthase (METK).